We begin with the raw amino-acid sequence, 596 residues long: MNTAIQAALDHVVQSLQQEGILPSDWNNNSTLTRTKDRSHGDFASNIAMVGSKAAGMKPRDLAEKILASLPEVADITKAEIAGPGFINFFLNADQRFAVLDQIQAQGQYYGQTQVNAEKKIQVEFVSANPTSSLHVGHGRGAAYGMTVANLLEATGAQVDREYYVNDAGRQMDILATSTYLRYLELLGQPLVFPKNAYQGDYVKEIAQSIIDKDGDAYVRSVADVYRNVPEDVQYAEELDSEGNKVVLSGDKEKHIDGLIANSQQLIGQGYRVFHQAALKAILDDIKDDLADFGVTFDQWFSEASLTQKIDEALQTLDQRGYLYEKEGNIWFKSTKFGDEKDRVVKRRNGQTTYFASDIAYHLDKLQRGYTHIVDIWGSDHHGYIARVKAAIDAMGYDSSKLTVLLVQFVSLWRGGEMVQMSSRSGQFVTLRELRQEVGNDAARFYYVMRKSEQHIDFDLDLAVSQSKDNAVYYIQYAHARICRMLEKANSTQMRFNQTQARQFANRLDLDAETEILAKLAAYPDILVRAANAYEPHQIGNYLKELAALFHGWYNEHKVLTEDVELTQARLLLSVNVQQVLRNGLDLLGVSAPEAM.

The short motif at 128 to 138 is the 'HIGH' region element; that stretch reads ANPTSSLHVGH.

This sequence belongs to the class-I aminoacyl-tRNA synthetase family. Monomer.

It is found in the cytoplasm. It carries out the reaction tRNA(Arg) + L-arginine + ATP = L-arginyl-tRNA(Arg) + AMP + diphosphate. This chain is Arginine--tRNA ligase, found in Acinetobacter baylyi (strain ATCC 33305 / BD413 / ADP1).